The sequence spans 604 residues: Protein TAX4 (604 aa).

5 disordered regions span residues His-38 to Ile-77, Ser-132 to Glu-249, Gly-267 to Asn-299, Asp-338 to Lys-380, and Pro-394 to Lys-428. Positions Tyr-176–Ile-185 are enriched in polar residues. 2 stretches are compositionally biased toward low complexity: residues Ser-186–Ser-203 and Ser-224–Leu-240. 3 stretches are compositionally biased toward basic residues: residues Ser-276–Leu-290, Lys-366–Leu-379, and Pro-396–Ser-421. Positions Ala-469–Val-559 constitute an EH domain.

It belongs to the IRS4 family. Interacts with INP51.

Its function is as follows. With IRS4, acts as a positive regulator of INP51 activity and phosphatidylinositol 4,5-bisphosphate turnover. Negatively regulates signaling through the cell integrity pathway, including the MAP kinase SLT2. The chain is Protein TAX4 (TAX4) from Saccharomyces cerevisiae (strain ATCC 204508 / S288c) (Baker's yeast).